Reading from the N-terminus, the 250-residue chain is MADS-box protein J2 (250 aa).

In terms of domain architecture, MADS-box spans 1-61 (MGRGRVELKR…GKLYEFSSAS (61 aa)). The region spanning 87–177 (TQMNYNEYVR…KNKLEESAAR (91 aa)) is the K-box domain.

It localises to the nucleus. Its function is as follows. MADS-box transcription factor that acts redundantly with EJ2 to control meristem maturation and inflorescence architecture. In Solanum lycopersicum (Tomato), this protein is MADS-box protein J2.